The following is a 610-amino-acid chain: MRFRHKAAALAATLALPLAGLVGLASPAQAATSATATFQKTSDWGTGFGGKWTVKNTGTTSLSSWTVEWDFPSGTKVTSAWDATVTNSADHWTAKNVGWNGTLAPGASVSFGFNGSGPGSPSGCKINGGSCDGSSVPGDEAPSAPGTPTASNITDTSVKLSWSAATDDKGVKNYDVLRDGATVATVTGTTYTDNGLTKGTDYSYSVKARDTGDQTGPASGSVKVTTTGGDGGEPNPNPGAEVKMGYFTNWGVYGRNYHVKNLVTSGSAEKITHINLRFGNVQGGKCTIGDAYADYDKAYTADQSVDGVADTWDQPLRANFNQLRNLKAEYPHIKILYSFGGWTWSGGFPDAVKNPAAFAKSCHDLVEDPRWADVFDGIDLDWEYPNACGLSCDETSAPNAFSSMMKAMRAEFGQDYLITAAVTADGSDGGKIDAADYGEASKYIDWYNVMTYDFFGAWAKNGPTAPHSPLNAYDGIPQQGFTTADAMAKFKSKGVPADKLLIGIGFYGRGWTGVTQSAPGGTATGPAAGTYEAGIEDYKVLKNSCPATGTVAGTAYAHCGTNWWSYDTPATIKSKMDWAEQQGLGGAFFWEFSGDTTNGELVSAIDSGLK.

The signal sequence occupies residues 1–30 (MRFRHKAAALAATLALPLAGLVGLASPAQA). A CBM2 domain is found at 31–134 (ATSATATFQK…KINGGSCDGS (104 aa)). 2 disordered regions span residues 125–153 (KING…ASNI) and 208–239 (ARDT…PNPG). In terms of domain architecture, Fibronectin type-III spans 144-229 (APGTPTASNI…GSVKVTTTGG (86 aa)). Residues 213–224 (DQTGPASGSVKV) are compositionally biased toward polar residues. A GH18 domain is found at 241–610 (EVKMGYFTNW…LVSAIDSGLK (370 aa)). Chitin contacts are provided by residues 313-314 (DQ) and 340-343 (GGWT). Glu-383 (proton donor) is an active-site residue. Residues Tyr-384, 450 to 453 (MTYD), and Trp-590 contribute to the chitin site.

It belongs to the glycosyl hydrolase 18 family. Chitinase class II subfamily.

The catalysed reaction is Random endo-hydrolysis of N-acetyl-beta-D-glucosaminide (1-&gt;4)-beta-linkages in chitin and chitodextrins.. In Streptomyces plicatus, this protein is Chitinase 63 (chtA).